A 705-amino-acid chain; its full sequence is MGESPASAVLNASAGLFSLKMETLESELTCPICLELFEDPLLLPCAHSLCFSCAHRILVSSCSSGESIEPITAFQCPTCRYVISLNHRGLDGLKRNVTLQNIIDRFQKASVSGPNSPSESRRERTYRPSSAMSSERIACQFCEQDPPRDAVKTCITCEVSYCDRCLRATHPNKKPFTSHRLVEPVSDTHLRGITCLDHENEKVNMYCVSDDQLICALCKLVGRHRDHQVASLNDRFEKLKQTLEMNLTNLVKRNSELENQMAKLIQICQQVEVNTAMHEAKLMEECDELVEIIQQRKQMIAVKIKETKVMKLRKLAQQVANCRQCLERSTVLINQAEHILKENDQARFLQSAKNIAERVAMATASSQVLIPDINFNDAFENFALDFSREKKLLEGLDYLTAPNPPSIREELCTASHDTITVHWISDDEFSISSYELQYTIFTGQANFISLYNSVDSWMIVPNIKQNHYTVHGLQSGTRYIFIVKAINQAGSRNSEPTRLKTNSQPFKLDPKMTHKKLKISNDGLQMEKDESSLKKSHTPERFSGTGCYGAAGNIFIDSGCHYWEVVMGSSTWYAIGIAYKSAPKNEWIGKNASSWVFSRCNSNFVVRHNNKEMLVDVPPQLKRLGVLLDYDNNMLSFYDPANSLHLHTFDVTFILPVCPTFTIWNKSLMILSGLPAPDFIDYPERQECNCRPQESPYVSGMKACH.

The RING-type zinc finger occupies Cys-30–Arg-80. Residues Ile-137–Pro-184 form a B box-type 1; degenerate zinc finger. The B box-type 2 zinc-finger motif lies at Leu-190 to Leu-232. Zn(2+)-binding residues include Cys-195, His-198, Cys-218, and His-224. The stretch at Asn-233 to Ala-301 forms a coiled coil. Residues Leu-340 to Leu-399 enclose the COS domain. Residues Pro-404–Gln-504 form the Fibronectin type-III domain. A B30.2/SPRY domain is found at Ile-486 to Phe-679.

This sequence belongs to the TRIM/RBCC family. As to quaternary structure, homodimer or heterodimer with MID1. Interacts with IGBP1. Post-translationally, phosphorylated on serine and threonine residues. Low abundance in brain and lung, with even lower levels in heart, liver, and kidney.

The protein resides in the cytoplasm. It is found in the cytoskeleton. It catalyses the reaction S-ubiquitinyl-[E2 ubiquitin-conjugating enzyme]-L-cysteine + [acceptor protein]-L-lysine = [E2 ubiquitin-conjugating enzyme]-L-cysteine + N(6)-ubiquitinyl-[acceptor protein]-L-lysine.. Its pathway is protein modification; protein ubiquitination. In terms of biological role, E3 ubiquitin ligase that plays a role in microtubule stabilization. Mediates the 'Lys-48'-linked polyubiquitination of LRRK2 to drive its localization to microtubules and its proteasomal degradation in neurons. This ubiquitination inhibits LRRK2 kinase activation by RAB29. This chain is Probable E3 ubiquitin-protein ligase MID2 (Mid2), found in Mus musculus (Mouse).